Consider the following 265-residue polypeptide: NAD kinase 1 (265 aa).

Asp45 acts as the Proton acceptor in catalysis. Residues 45–46, 122–123, Arg148, Asp150, and Ala185 each bind NAD(+); these read DG and NE.

Belongs to the NAD kinase family. A divalent metal cation is required as a cofactor.

Its subcellular location is the cytoplasm. The enzyme catalyses NAD(+) + ATP = ADP + NADP(+) + H(+). In terms of biological role, involved in the regulation of the intracellular balance of NAD and NADP, and is a key enzyme in the biosynthesis of NADP. Catalyzes specifically the phosphorylation on 2'-hydroxyl of the adenosine moiety of NAD to yield NADP. In Bacillus cereus (strain ATCC 10987 / NRS 248), this protein is NAD kinase 1.